Here is a 136-residue protein sequence, read N- to C-terminus: Large ribosomal subunit protein uL16 (136 aa).

This sequence belongs to the universal ribosomal protein uL16 family. In terms of assembly, part of the 50S ribosomal subunit.

Its function is as follows. Binds 23S rRNA and is also seen to make contacts with the A and possibly P site tRNAs. The polypeptide is Large ribosomal subunit protein uL16 (Hamiltonella defensa subsp. Acyrthosiphon pisum (strain 5AT)).